The sequence spans 546 residues: Chaperonin GroEL (546 aa).

Residues 29-32 (TLGP), lysine 50, 86-90 (DGTTT), glycine 414, 477-479 (NAL), and aspartate 493 contribute to the ATP site.

Belongs to the chaperonin (HSP60) family. In terms of assembly, forms a cylinder of 14 subunits composed of two heptameric rings stacked back-to-back. Interacts with the co-chaperonin GroES.

It localises to the cytoplasm. It carries out the reaction ATP + H2O + a folded polypeptide = ADP + phosphate + an unfolded polypeptide.. Its function is as follows. Together with its co-chaperonin GroES, plays an essential role in assisting protein folding. The GroEL-GroES system forms a nano-cage that allows encapsulation of the non-native substrate proteins and provides a physical environment optimized to promote and accelerate protein folding. This is Chaperonin GroEL from Leptospira interrogans serogroup Icterohaemorrhagiae serovar Lai (strain 56601).